The following is a 140-amino-acid chain: ATP synthase epsilon chain (140 aa).

The protein belongs to the ATPase epsilon chain family. As to quaternary structure, F-type ATPases have 2 components, CF(1) - the catalytic core - and CF(0) - the membrane proton channel. CF(1) has five subunits: alpha(3), beta(3), gamma(1), delta(1), epsilon(1). CF(0) has three main subunits: a, b and c.

The protein resides in the cell inner membrane. In terms of biological role, produces ATP from ADP in the presence of a proton gradient across the membrane. The sequence is that of ATP synthase epsilon chain from Xanthomonas axonopodis pv. citri (strain 306).